Consider the following 61-residue polypeptide: Large ribosomal subunit protein uL30 (61 aa).

It belongs to the universal ribosomal protein uL30 family. As to quaternary structure, part of the 50S ribosomal subunit.

In Corynebacterium glutamicum (strain ATCC 13032 / DSM 20300 / JCM 1318 / BCRC 11384 / CCUG 27702 / LMG 3730 / NBRC 12168 / NCIMB 10025 / NRRL B-2784 / 534), this protein is Large ribosomal subunit protein uL30.